Consider the following 86-residue polypeptide: Large ribosomal subunit protein bL31B (86 aa).

The protein belongs to the bacterial ribosomal protein bL31 family. Type B subfamily. Part of the 50S ribosomal subunit.

This chain is Large ribosomal subunit protein bL31B, found in Citrobacter koseri (strain ATCC BAA-895 / CDC 4225-83 / SGSC4696).